Consider the following 439-residue polypeptide: Secreted aspartic protease FUS4 (439 aa).

Residues 1-22 (MLTIATLHVALQVFGAFSPSHA) form the signal peptide. In terms of domain architecture, Peptidase A1 spans 49 to 434 (YLFNVTVGSP…NFEDRSFGLA (386 aa)). N-linked (GlcNAc...) asparagine glycans are attached at residues asparagine 52 and asparagine 61. Residue aspartate 67 is part of the active site. N-linked (GlcNAc...) asparagine glycosylation is found at asparagine 101, asparagine 107, and asparagine 123. Aspartate 296 is an active-site residue. A disulfide bridge links cysteine 352 with cysteine 390.

It belongs to the peptidase A1 family.

The protein localises to the secreted. In terms of biological role, secreted aspartic protease; part of the gene cluster that mediates the biosynthesis of the mycotoxin fusarin C. Within the cluster, FUS1, FUS2, FUS8 and FUS9 are sufficient for fusarin production. The other FUS cluster members are not essential for fusarin C biosynthesis. The chain is Secreted aspartic protease FUS4 from Gibberella moniliformis (strain M3125 / FGSC 7600) (Maize ear and stalk rot fungus).